The chain runs to 382 residues: Alcohol dehydrogenase 1 (382 aa).

8 residues coordinate Zn(2+): Cys49, Thr51, His71, Cys101, Cys104, Cys107, Cys115, and Cys179. Residues Thr51 and His71 each coordinate an alcohol. An NAD(+)-binding site is contributed by Thr51. NAD(+)-binding positions include 204–209 (GLGAVG), Asp228, Arg233, Thr275, Val298, 298–300 (VGV), Phe325, and Arg375.

It belongs to the zinc-containing alcohol dehydrogenase family. In terms of assembly, homodimer. Zn(2+) is required as a cofactor.

It is found in the cytoplasm. The enzyme catalyses a primary alcohol + NAD(+) = an aldehyde + NADH + H(+). The catalysed reaction is a secondary alcohol + NAD(+) = a ketone + NADH + H(+). This protein is responsible for the conversion of alcohols to aldehydes in plants and is important for NAD metabolism during anaerobic respiration. This is Alcohol dehydrogenase 1 (ADH1) from Petunia hybrida (Petunia).